Consider the following 234-residue polypeptide: Probable plastid-lipid-associated protein 5, chloroplastic (234 aa).

Residues Met-1–Arg-45 constitute a chloroplast transit peptide.

Belongs to the PAP/fibrillin family.

The protein resides in the plastid. Its subcellular location is the chloroplast thylakoid. This is Probable plastid-lipid-associated protein 5, chloroplastic (PAP5) from Arabidopsis thaliana (Mouse-ear cress).